The chain runs to 216 residues: Chitooligosaccharide deacetylase (216 aa).

Residues 21–213 (RCVYLTFDDG…ALHSRGFEIR (193 aa)) enclose the NodB homology domain. D28 serves as the catalytic Proton acceptor. 2 residues coordinate a divalent metal cation: H79 and H83. The active-site Proton donor is H174.

Belongs to the polysaccharide deacetylase family.

The protein localises to the cytoplasm. In terms of biological role, is involved in generating a small heat-stable compound (Nod), an acylated oligomer of N-acetylglucosamine, that stimulates mitosis in various plant protoplasts. The chain is Chitooligosaccharide deacetylase (nodB) from Rhizobium leguminosarum bv. viciae.